The primary structure comprises 105 residues: Nitrogen fixation nifHD2 region GlnB-like protein 1 (105 aa).

The protein belongs to the P(II) protein family.

In terms of biological role, could be involved in the regulation of nitrogen fixation. This chain is Nitrogen fixation nifHD2 region GlnB-like protein 1, found in Methanosarcina barkeri.